The sequence spans 293 residues: Ribosomal protein L11 methyltransferase (293 aa).

Positions 145, 166, 188, and 230 each coordinate S-adenosyl-L-methionine.

It belongs to the methyltransferase superfamily. PrmA family.

Its subcellular location is the cytoplasm. It carries out the reaction L-lysyl-[protein] + 3 S-adenosyl-L-methionine = N(6),N(6),N(6)-trimethyl-L-lysyl-[protein] + 3 S-adenosyl-L-homocysteine + 3 H(+). In terms of biological role, methylates ribosomal protein L11. The polypeptide is Ribosomal protein L11 methyltransferase (Edwardsiella ictaluri (strain 93-146)).